The following is a 269-amino-acid chain: Tryptophan synthase alpha chain (269 aa).

Catalysis depends on proton acceptor residues Glu49 and Asp60.

This sequence belongs to the TrpA family. Tetramer of two alpha and two beta chains.

The catalysed reaction is (1S,2R)-1-C-(indol-3-yl)glycerol 3-phosphate + L-serine = D-glyceraldehyde 3-phosphate + L-tryptophan + H2O. It participates in amino-acid biosynthesis; L-tryptophan biosynthesis; L-tryptophan from chorismate: step 5/5. In terms of biological role, the alpha subunit is responsible for the aldol cleavage of indoleglycerol phosphate to indole and glyceraldehyde 3-phosphate. The protein is Tryptophan synthase alpha chain of Salmonella arizonae (strain ATCC BAA-731 / CDC346-86 / RSK2980).